Reading from the N-terminus, the 358-residue chain is Transmembrane protein 144 homolog B (358 aa).

The next 10 helical transmembrane spans lie at 6-26 (VIGY…YVPV), 35-55 (LAFT…AMFI), 60-79 (IFDP…NFCV), 86-108 (IGIG…FTGK), 122-142 (PALN…FFFI), 211-231 (ILGI…MVPM), 244-264 (LSFV…VFIV), 279-299 (IFPS…LMVA), 307-327 (IGFP…SVFY), and 337-357 (LLIL…LALS).

This sequence belongs to the TMEM144 family.

It is found in the membrane. The chain is Transmembrane protein 144 homolog B (tmem144B) from Dictyostelium discoideum (Social amoeba).